The sequence spans 240 residues: 6-phosphogluconolactonase (240 aa).

This sequence belongs to the glucosamine/galactosamine-6-phosphate isomerase family. 6-phosphogluconolactonase subfamily.

The enzyme catalyses 6-phospho-D-glucono-1,5-lactone + H2O = 6-phospho-D-gluconate + H(+). It participates in carbohydrate degradation; pentose phosphate pathway; D-ribulose 5-phosphate from D-glucose 6-phosphate (oxidative stage): step 2/3. Hydrolysis of 6-phosphogluconolactone to 6-phosphogluconate. This Nostoc sp. (strain PCC 7120 / SAG 25.82 / UTEX 2576) protein is 6-phosphogluconolactonase (pgl).